The following is a 63-amino-acid chain: Cytochrome b-c1 complex subunit 9 (63 aa).

Residues 2–21 lie on the Mitochondrial matrix side of the membrane; the sequence is AAATLTSKLYSLLFRRTSTF. The chain crosses the membrane as a helical span at residues 22-47; that stretch reads ALTIIVGVMFFERAFDQGADAIYDHI. Over 48–63 the chain is Mitochondrial intermembrane; that stretch reads NEGKLWKHIKHKYENK.

This sequence belongs to the UQCR10/QCR9 family. In terms of assembly, component of the ubiquinol-cytochrome c oxidoreductase (cytochrome b-c1 complex, complex III, CIII), a multisubunit enzyme composed of 11 subunits. The complex is composed of 3 respiratory subunits cytochrome b, cytochrome c1 and Rieske protein UQCRFS1, 2 core protein subunits UQCRC1/QCR1 and UQCRC2/QCR2, and 6 low-molecular weight protein subunits UQCRH/QCR6, UQCRB/QCR7, UQCRQ/QCR8, UQCR10/QCR9, UQCR11/QCR10 and subunit 9, the cleavage product of Rieske protein UQCRFS1. The complex exists as an obligatory dimer and forms supercomplexes (SCs) in the inner mitochondrial membrane with NADH-ubiquinone oxidoreductase (complex I, CI) and cytochrome c oxidase (complex IV, CIV), resulting in different assemblies (supercomplex SCI(1)III(2)IV(1) and megacomplex MCI(2)III(2)IV(2)). Interacts with STMP1.

It localises to the mitochondrion inner membrane. In terms of biological role, component of the ubiquinol-cytochrome c oxidoreductase, a multisubunit transmembrane complex that is part of the mitochondrial electron transport chain which drives oxidative phosphorylation. The respiratory chain contains 3 multisubunit complexes succinate dehydrogenase (complex II, CII), ubiquinol-cytochrome c oxidoreductase (cytochrome b-c1 complex, complex III, CIII) and cytochrome c oxidase (complex IV, CIV), that cooperate to transfer electrons derived from NADH and succinate to molecular oxygen, creating an electrochemical gradient over the inner membrane that drives transmembrane transport and the ATP synthase. The cytochrome b-c1 complex catalyzes electron transfer from ubiquinol to cytochrome c, linking this redox reaction to translocation of protons across the mitochondrial inner membrane, with protons being carried across the membrane as hydrogens on the quinol. In the process called Q cycle, 2 protons are consumed from the matrix, 4 protons are released into the intermembrane space and 2 electrons are passed to cytochrome c. The chain is Cytochrome b-c1 complex subunit 9 (UQCR10) from Homo sapiens (Human).